Reading from the N-terminus, the 181-residue chain is FMN reductase (NADH) RutF (181 aa).

The protein belongs to the non-flavoprotein flavin reductase family. RutF subfamily.

The catalysed reaction is FMNH2 + NAD(+) = FMN + NADH + 2 H(+). In terms of biological role, catalyzes the reduction of FMN to FMNH2 which is used to reduce pyrimidine by RutA via the Rut pathway. The chain is FMN reductase (NADH) RutF from Ancylobacter novellus (strain ATCC 8093 / DSM 506 / JCM 20403 / CCM 1077 / IAM 12100 / NBRC 12443 / NCIMB 10456) (Starkeya novella).